A 395-amino-acid polypeptide reads, in one-letter code: Elongation factor Tu (395 aa).

Residues 10–204 form the tr-type G domain; the sequence is KEHANIGTIG…AVDDFIPTPE (195 aa). The segment at 19–26 is G1; the sequence is GHVDHGKT. Residue 19–26 participates in GTP binding; the sequence is GHVDHGKT. Mg(2+) is bound at residue threonine 26. The G2 stretch occupies residues 60 to 64; sequence GITIN. The tract at residues 81–84 is G3; the sequence is DCPG. Residues 81–85 and 136–139 contribute to the GTP site; these read DCPGH and NKVD. A G4 region spans residues 136 to 139; that stretch reads NKVD. Positions 174–176 are G5; it reads SAL.

Belongs to the TRAFAC class translation factor GTPase superfamily. Classic translation factor GTPase family. EF-Tu/EF-1A subfamily. Monomer.

The protein localises to the cytoplasm. It carries out the reaction GTP + H2O = GDP + phosphate + H(+). Its function is as follows. GTP hydrolase that promotes the GTP-dependent binding of aminoacyl-tRNA to the A-site of ribosomes during protein biosynthesis. In Staphylococcus saprophyticus subsp. saprophyticus (strain ATCC 15305 / DSM 20229 / NCIMB 8711 / NCTC 7292 / S-41), this protein is Elongation factor Tu.